We begin with the raw amino-acid sequence, 208 residues long: Troponin I, cardiac muscle (208 aa).

Disordered stretches follow at residues 1-37, 54-74, and 168-208; these read MAEEEEPKPPPLRRKSSANYRGYAVEPHAKRQSKISA, DLEREEQERAGEKQRHLGELC, and VRKD…GGQS. Residue alanine 2 is modified to N-acetylalanine. The interval 28 to 73 is involved in binding TNC; it reads HAKRQSKISASRKLQLKTLLLQRAKRDLEREEQERAGEKQRHLGEL. 2 stretches are compositionally biased toward basic and acidic residues: residues 54 to 71 and 168 to 187; these read DLEREEQERAGEKQRHLG and VRKDEAEKESREVGDWRKNV.

It belongs to the troponin I family. In terms of assembly, binds to actin and tropomyosin.

In terms of biological role, troponin I is the inhibitory subunit of troponin, the thin filament regulatory complex which confers calcium-sensitivity to striated muscle actomyosin ATPase activity. The chain is Troponin I, cardiac muscle (TNNI3) from Coturnix japonica (Japanese quail).